Here is an 86-residue protein sequence, read N- to C-terminus: Small ribosomal subunit protein bS16 (86 aa).

This sequence belongs to the bacterial ribosomal protein bS16 family.

This chain is Small ribosomal subunit protein bS16, found in Xanthomonas campestris pv. campestris (strain 8004).